A 938-amino-acid chain; its full sequence is Ubiquitin carboxyl-terminal hydrolase Usp2 (938 aa).

6 disordered regions span residues 1-53 (MMLD…KVGA), 91-117 (KVKT…NTSR), 130-254 (FNGN…ISTT), 273-297 (EQNQ…HRYP), 360-410 (LSGQ…NLQQ), and 500-610 (KDAT…EKSE). Residues 22-36 (STTKTSSVVATSASS) show a composition bias toward low complexity. Composition is skewed to low complexity over residues 137 to 158 (TTTN…NTSN), 167 to 177 (STTATATSTST), 198 to 227 (MNGH…QRQQ), and 275 to 289 (NQVQ…PSSS). The segment covering 392 to 410 (ASRSNHGSQAGGSSSNLQQ) has biased composition (polar residues). 2 stretches are compositionally biased toward low complexity: residues 502 to 555 (ATTA…TARS) and 574 to 583 (TSRSSIGTSS). The segment covering 592–610 (HNSDDGYKTASSSRDEKSE) has biased composition (basic and acidic residues). The USP domain occupies 613–938 (CGLRNIGNTC…SAYILFYERT (326 aa)). Residue C622 is the Nucleophile of the active site. C765, C768, C814, and C817 together coordinate Zn(2+). The active-site Proton acceptor is H895.

The protein belongs to the peptidase C19 family. In terms of assembly, interacts (via N-terminus) with imd (via N-terminus). Interacts with Rpt6.

It catalyses the reaction Thiol-dependent hydrolysis of ester, thioester, amide, peptide and isopeptide bonds formed by the C-terminal Gly of ubiquitin (a 76-residue protein attached to proteins as an intracellular targeting signal).. Hydrolase that deubiquitinates polyubiquitinated target proteins. Required for preventing the activation of the Toll signaling cascades under unchallenged conditions. Essential for bodily calcium homeostasis. In terms of biological role, required for preventing the activation of the immune deficiency (Imd) signaling cascade under unchallenged conditions. Regulates the Imd pathway by specifically removing 'Lys-48'-linked ubiquitin from imd. Also promotes imd degradation probably by binding to imd and enhancing its association with the proteasome. This Drosophila melanogaster (Fruit fly) protein is Ubiquitin carboxyl-terminal hydrolase Usp2.